A 210-amino-acid chain; its full sequence is Putative transmembrane protein DDB_G0267530 (210 aa).

A disordered region spans residues 1–40 (MGVEDQPQTQPQTQPQQQPQMGYQPQMGYQPQAQMGYQPQ). 2 consecutive transmembrane segments (helical) span residues 119 to 139 (VIVF…FFFI) and 148 to 168 (TFGI…VIVV).

It is found in the membrane. In Dictyostelium discoideum (Social amoeba), this protein is Putative transmembrane protein DDB_G0267530.